We begin with the raw amino-acid sequence, 164 residues long: UPF0114 protein YqhA (164 aa).

The next 3 membrane-spanning stretches (helical) occupy residues 15 to 35 (LLAP…LKFF), 53 to 73 (LILV…LVMV), and 136 to 156 (LMWY…MGYL).

It belongs to the UPF0114 family.

It is found in the cell membrane. The sequence is that of UPF0114 protein YqhA from Shigella dysenteriae serotype 1 (strain Sd197).